A 221-amino-acid chain; its full sequence is Endonuclease V (221 aa).

Positions 38 and 104 each coordinate Mg(2+).

The protein belongs to the endonuclease V family. The cofactor is Mg(2+).

It is found in the cytoplasm. It catalyses the reaction Endonucleolytic cleavage at apurinic or apyrimidinic sites to products with a 5'-phosphate.. In terms of biological role, DNA repair enzyme involved in the repair of deaminated bases. Selectively cleaves double-stranded DNA at the second phosphodiester bond 3' to a deoxyinosine leaving behind the intact lesion on the nicked DNA. Recognizes only deoxyinosine. This is Endonuclease V from Archaeoglobus fulgidus (strain ATCC 49558 / DSM 4304 / JCM 9628 / NBRC 100126 / VC-16).